The primary structure comprises 142 residues: Large-conductance mechanosensitive channel (142 aa).

A run of 2 helical transmembrane segments spans residues 10–30 and 86–106; these read FAIK…AAFS and GNFI…FLMV.

The protein belongs to the MscL family. In terms of assembly, homopentamer.

It localises to the cell inner membrane. In terms of biological role, channel that opens in response to stretch forces in the membrane lipid bilayer. May participate in the regulation of osmotic pressure changes within the cell. The sequence is that of Large-conductance mechanosensitive channel from Polaromonas naphthalenivorans (strain CJ2).